Here is a 576-residue protein sequence, read N- to C-terminus: Dihydroxy-acid dehydratase (576 aa).

Cys-56 contributes to the [2Fe-2S] cluster binding site. Asp-88 contacts Mg(2+). Cys-129 is a [2Fe-2S] cluster binding site. Mg(2+)-binding residues include Asp-130 and Lys-131. Lys-131 is subject to N6-carboxylysine. Cys-201 is a binding site for [2Fe-2S] cluster. Glu-453 contributes to the Mg(2+) binding site. Ser-479 serves as the catalytic Proton acceptor.

It belongs to the IlvD/Edd family. As to quaternary structure, homodimer. [2Fe-2S] cluster is required as a cofactor. Requires Mg(2+) as cofactor.

It carries out the reaction (2R)-2,3-dihydroxy-3-methylbutanoate = 3-methyl-2-oxobutanoate + H2O. It catalyses the reaction (2R,3R)-2,3-dihydroxy-3-methylpentanoate = (S)-3-methyl-2-oxopentanoate + H2O. The protein operates within amino-acid biosynthesis; L-isoleucine biosynthesis; L-isoleucine from 2-oxobutanoate: step 3/4. It participates in amino-acid biosynthesis; L-valine biosynthesis; L-valine from pyruvate: step 3/4. Functions in the biosynthesis of branched-chain amino acids. Catalyzes the dehydration of (2R,3R)-2,3-dihydroxy-3-methylpentanoate (2,3-dihydroxy-3-methylvalerate) into 2-oxo-3-methylpentanoate (2-oxo-3-methylvalerate) and of (2R)-2,3-dihydroxy-3-methylbutanoate (2,3-dihydroxyisovalerate) into 2-oxo-3-methylbutanoate (2-oxoisovalerate), the penultimate precursor to L-isoleucine and L-valine, respectively. The polypeptide is Dihydroxy-acid dehydratase (Parvibaculum lavamentivorans (strain DS-1 / DSM 13023 / NCIMB 13966)).